The chain runs to 1349 residues: DNA-directed RNA polymerase subunit beta' (1349 aa).

Residues C70, C72, C85, and C88 each contribute to the Zn(2+) site. D460, D462, and D464 together coordinate Mg(2+). Zn(2+) is bound by residues C801, C875, C882, and C885.

The protein belongs to the RNA polymerase beta' chain family. The RNAP catalytic core consists of 2 alpha, 1 beta, 1 beta' and 1 omega subunit. When a sigma factor is associated with the core the holoenzyme is formed, which can initiate transcription. Mg(2+) is required as a cofactor. Zn(2+) serves as cofactor.

The enzyme catalyses RNA(n) + a ribonucleoside 5'-triphosphate = RNA(n+1) + diphosphate. DNA-dependent RNA polymerase catalyzes the transcription of DNA into RNA using the four ribonucleoside triphosphates as substrates. In Desulfotalea psychrophila (strain LSv54 / DSM 12343), this protein is DNA-directed RNA polymerase subunit beta'.